The following is a 182-amino-acid chain: MLSPKRTKFRKQQRGRMRGVATRGNKIAFGQFALQAQECGWITSRQIEASRRAMTRYVKRGGQIWIRIFPDKPVTMRPAETRMGSGKGNPEFWVAVVKPGRILFEMGGEEITEEIAKEAMRLAQYKLPIKTKFLALAEGEKPTQVGKAPPKSSFLPSDETETAAAQAGTEASSASSVTPLES.

Positions Glu140 to Ser182 are disordered. Residues Thr162–Ser176 are compositionally biased toward low complexity.

This sequence belongs to the universal ribosomal protein uL16 family. As to quaternary structure, part of the 50S ribosomal subunit.

Functionally, binds 23S rRNA and is also seen to make contacts with the A and possibly P site tRNAs. This Prochlorococcus marinus (strain SARG / CCMP1375 / SS120) protein is Large ribosomal subunit protein uL16.